The sequence spans 201 residues: Orotate phosphoribosyltransferase (201 aa).

5-phospho-alpha-D-ribose 1-diphosphate is bound at residue 113-121; the sequence is EDIITTGKS. Residues threonine 117 and arginine 145 each coordinate orotate.

This sequence belongs to the purine/pyrimidine phosphoribosyltransferase family. PyrE subfamily. In terms of assembly, homodimer. Mg(2+) serves as cofactor.

The catalysed reaction is orotidine 5'-phosphate + diphosphate = orotate + 5-phospho-alpha-D-ribose 1-diphosphate. Its pathway is pyrimidine metabolism; UMP biosynthesis via de novo pathway; UMP from orotate: step 1/2. Its function is as follows. Catalyzes the transfer of a ribosyl phosphate group from 5-phosphoribose 1-diphosphate to orotate, leading to the formation of orotidine monophosphate (OMP). The protein is Orotate phosphoribosyltransferase of Helicobacter pylori (strain P12).